Consider the following 390-residue polypeptide: Phosphopentomutase (390 aa).

Positions 12, 285, 290, 326, 327, and 338 each coordinate Mn(2+).

The protein belongs to the phosphopentomutase family. Mn(2+) serves as cofactor.

It is found in the cytoplasm. It catalyses the reaction 2-deoxy-alpha-D-ribose 1-phosphate = 2-deoxy-D-ribose 5-phosphate. The catalysed reaction is alpha-D-ribose 1-phosphate = D-ribose 5-phosphate. The protein operates within carbohydrate degradation; 2-deoxy-D-ribose 1-phosphate degradation; D-glyceraldehyde 3-phosphate and acetaldehyde from 2-deoxy-alpha-D-ribose 1-phosphate: step 1/2. Its function is as follows. Isomerase that catalyzes the conversion of deoxy-ribose 1-phosphate (dRib-1-P) and ribose 1-phosphate (Rib-1-P) to deoxy-ribose 5-phosphate (dRib-5-P) and ribose 5-phosphate (Rib-5-P), respectively. The polypeptide is Phosphopentomutase (Brevibacillus brevis (strain 47 / JCM 6285 / NBRC 100599)).